The sequence spans 105 residues: Heme oxygenase (mycobilin-producing) (105 aa).

Residues 3–92 form the ABM domain; it reads VVKINAIEVP…VATGASLLEF (90 aa). Heme-binding positions include 22–26, His-75, and 83–86; these read RFAHR and VATG.

This sequence belongs to the antibiotic biosynthesis monooxygenase family. In terms of assembly, homodimer.

It catalyses the reaction heme b + 3 AH2 + 3 O2 + 2 H(+) = mycobilin a + Fe(2+) + 3 A + 3 H2O. The enzyme catalyses heme b + 3 AH2 + 3 O2 + 2 H(+) = mycobilin b + Fe(2+) + 3 A + 3 H2O. Its function is as follows. Catalyzes the oxidative degradation of the heme macrocyclic porphyrin ring in the presence of a suitable electron donor such as ascorbate or NADPH--cytochrome P450 reductase, with subsequent release of free iron. In Mycobacterium tuberculosis (strain CDC 1551 / Oshkosh), this protein is Heme oxygenase (mycobilin-producing) (mhuD).